A 69-amino-acid polypeptide reads, in one-letter code: Disintegrin VLO5B (69 aa).

The 66-residue stretch at 1 to 66 (MNSANPCCDP…DCPRNPWKSE (66 aa)) folds into the Disintegrin domain. Cystine bridges form between Cys-7/Cys-30, Cys-21/Cys-27, Cys-26/Cys-51, and Cys-39/Cys-58. The short motif at 43-45 (MLD) is the Cell attachment site; atypical (MLD) element.

It belongs to the disintegrin family. Dimeric disintegrin subfamily. Heterodimer with VLO5A; disulfide-linked. As to expression, expressed by the venom gland.

It localises to the secreted. Functionally, poor inhibitor of platelet aggregation. The disintegrin inhibits the adhesion of the alpha-4/beta-1 (ITGA4/ITGB1) integrin to VCAM-1. Inhibition on alpha-2b/beta-3 (ITGA2B/ITGB3) is low. The polypeptide is Disintegrin VLO5B (Macrovipera lebetina obtusa (Levant blunt-nosed viper)).